The following is a 410-amino-acid chain: Mating-type locus allele B6 protein (410 aa).

The tract at residues 1–110 (MSRDPKLSLS…VNVASPAVEY (110 aa)) is variable domain between B alleles. The segment at residues 107–184 (AVEYRNLSED…NARRRSGWSH (78 aa)) is a DNA-binding region (homeobox; TALE-type). The highly conserved between B alleles stretch occupies residues 111–410 (RNLSEDLPAY…PFFCLSIAFV (300 aa)). 3 disordered regions span residues 202-224 (RAKL…PSDD), 278-335 (TPKP…TPEL), and 373-393 (KARG…QQPD). Residues 205-219 (LSSSNQSTPPSLTSE) are compositionally biased toward polar residues. A Nuclear localization signal motif is present at residues 276–308 (KKTPKPGMPRPVTTVAKRQPARKTKPAAKPKSR). The span at 294 to 307 (QPARKTKPAAKPKS) shows a compositional bias: basic residues. Residues 312–335 (PRASTTPSIDSTLDSSKLESTPEL) show a composition bias toward polar residues. The tract at residues 333 to 410 (PELSMCSTAD…PFFCLSIAFV (78 aa)) is not essential for B6 function. Positions 375-388 (RGNRKVKALPKRAG) are enriched in basic residues.

It belongs to the TALE/M-ATYP homeobox family.

It localises to the nucleus. The B locus has at least 25 alleles, and any combination of two different B alleles yields a multimeric regulatory protein, that activates genes responsible for the pathogenicity and for the sexual development of the fungus within the corn plant. The chain is Mating-type locus allele B6 protein from Mycosarcoma maydis (Corn smut fungus).